We begin with the raw amino-acid sequence, 402 residues long: Serine/threonine transporter SstT (402 aa).

8 helical membrane passes run 17–37 (IAIG…ITVI), 44–64 (FVGG…ANAL), 79–99 (IVLY…SHYI), 138–158 (ALSQ…GFAM), 179–199 (IVRW…FDTI), 212–232 (VLIL…NPII), 295–315 (MAGA…TLGI), and 336–356 (ASGI…LFGI).

Belongs to the dicarboxylate/amino acid:cation symporter (DAACS) (TC 2.A.23) family.

The protein resides in the cell membrane. The catalysed reaction is L-serine(in) + Na(+)(in) = L-serine(out) + Na(+)(out). It catalyses the reaction L-threonine(in) + Na(+)(in) = L-threonine(out) + Na(+)(out). In terms of biological role, involved in the import of serine and threonine into the cell, with the concomitant import of sodium (symport system). This Streptococcus thermophilus (strain ATCC BAA-491 / LMD-9) protein is Serine/threonine transporter SstT.